Consider the following 163-residue polypeptide: Probable RNA-binding protein EIF1AD (163 aa).

An S1-like domain is found at 18–96 (MMEDDYELPT…VKAEISKILT (79 aa)). Residues 106 to 163 (AGIWPERFAKNPPQEAKAQNDDEDSDFEDDLTPNTNRPVQESDEEDEDTDTESSDEED) form a disordered region. Composition is skewed to acidic residues over residues 126–136 (DDEDSDFEDDL) and 146–163 (ESDE…DEED).

This sequence belongs to the EIF1AD family.

The sequence is that of Probable RNA-binding protein EIF1AD from Drosophila pseudoobscura pseudoobscura (Fruit fly).